The sequence spans 137 residues: Putative pre-16S rRNA nuclease (137 aa).

This sequence belongs to the YqgF nuclease family.

The protein resides in the cytoplasm. In terms of biological role, could be a nuclease involved in processing of the 5'-end of pre-16S rRNA. This chain is Putative pre-16S rRNA nuclease, found in Anaeromyxobacter sp. (strain K).